Consider the following 513-residue polypeptide: ATP synthase subunit alpha (513 aa).

Position 169–176 (169–176) interacts with ATP; the sequence is GDRQTGKT.

This sequence belongs to the ATPase alpha/beta chains family. In terms of assembly, F-type ATPases have 2 components, CF(1) - the catalytic core - and CF(0) - the membrane proton channel. CF(1) has five subunits: alpha(3), beta(3), gamma(1), delta(1), epsilon(1). CF(0) has three main subunits: a(1), b(2) and c(9-12). The alpha and beta chains form an alternating ring which encloses part of the gamma chain. CF(1) is attached to CF(0) by a central stalk formed by the gamma and epsilon chains, while a peripheral stalk is formed by the delta and b chains.

Its subcellular location is the cell inner membrane. The enzyme catalyses ATP + H2O + 4 H(+)(in) = ADP + phosphate + 5 H(+)(out). Functionally, produces ATP from ADP in the presence of a proton gradient across the membrane. The alpha chain is a regulatory subunit. The chain is ATP synthase subunit alpha from Cronobacter sakazakii (strain ATCC BAA-894) (Enterobacter sakazakii).